The chain runs to 71 residues: Mitotic-spindle organizing protein 1B (71 aa).

Belongs to the MOZART1 family. Homo- and heteromultimer. Part of the gamma-tubulin complex. Interacts with TUBB2/TUBB3, GIP2, GCP3 and TSA1 (via C-terminal domain). As to expression, mostly expressed in siliques and flowers, and, to a lower extent, in leaves, roots and seedlings, with highest levels in young tissues and meristematic cells, and the vasculature.

It localises to the cytoplasm. The protein resides in the cytoskeleton. It is found in the microtubule organizing center. Its subcellular location is the spindle. The protein localises to the nucleus. It localises to the phragmoplast. The protein resides in the nucleus envelope. In terms of biological role, required for gamma-tubulin complex recruitment to the microtubule organizing centers (MTOCs). During mitosis, modulates gamma-tubulin complex localization, spindle stability and chromosomal segregation. Necessary for gametophyte development and embryogenesis. This is Mitotic-spindle organizing protein 1B (GIP1) from Arabidopsis thaliana (Mouse-ear cress).